The sequence spans 433 residues: Trigger factor (433 aa).

One can recognise a PPIase FKBP-type domain in the interval 163–248 (GDVVVLDFAA…VHAVKERRLP (86 aa)).

This sequence belongs to the FKBP-type PPIase family. Tig subfamily.

Its subcellular location is the cytoplasm. It catalyses the reaction [protein]-peptidylproline (omega=180) = [protein]-peptidylproline (omega=0). Involved in protein export. Acts as a chaperone by maintaining the newly synthesized protein in an open conformation. Functions as a peptidyl-prolyl cis-trans isomerase. The polypeptide is Trigger factor (Nitratidesulfovibrio vulgaris (strain DP4) (Desulfovibrio vulgaris)).